The sequence spans 254 residues: Putative hydro-lyase SACE_1553 (254 aa).

Belongs to the D-glutamate cyclase family.

The sequence is that of Putative hydro-lyase SACE_1553 from Saccharopolyspora erythraea (strain ATCC 11635 / DSM 40517 / JCM 4748 / NBRC 13426 / NCIMB 8594 / NRRL 2338).